A 788-amino-acid chain; its full sequence is Endonuclease MutS2 (788 aa).

Residue 332-339 (GPNTGGKT) coordinates ATP. One can recognise a Smr domain in the interval 713–788 (VDLRGMDAEE…GTGVTVVEIK (76 aa)).

Belongs to the DNA mismatch repair MutS family. MutS2 subfamily. As to quaternary structure, homodimer. Binds to stalled ribosomes, contacting rRNA.

Its function is as follows. Endonuclease that is involved in the suppression of homologous recombination and thus may have a key role in the control of bacterial genetic diversity. In terms of biological role, acts as a ribosome collision sensor, splitting the ribosome into its 2 subunits. Detects stalled/collided 70S ribosomes which it binds and splits by an ATP-hydrolysis driven conformational change. Acts upstream of the ribosome quality control system (RQC), a ribosome-associated complex that mediates the extraction of incompletely synthesized nascent chains from stalled ribosomes and their subsequent degradation. Probably generates substrates for RQC. This Clostridium botulinum (strain 657 / Type Ba4) protein is Endonuclease MutS2.